The sequence spans 72 residues: Protein SlyX homolog (72 aa).

The disordered stretch occupies residues 53–72 (KDISPSNIRREEEETPPPHY).

Belongs to the SlyX family.

The protein is Protein SlyX homolog of Marinobacter nauticus (strain ATCC 700491 / DSM 11845 / VT8) (Marinobacter aquaeolei).